The following is a 265-amino-acid chain: Glutamate racemase (265 aa).

Substrate contacts are provided by residues 7–8 and 39–40; these read DS and YG. Cys-70 serves as the catalytic Proton donor/acceptor. 71 to 72 contacts substrate; the sequence is NT. The Proton donor/acceptor role is filled by Cys-182. Residue 183–184 coordinates substrate; it reads TH.

The protein belongs to the aspartate/glutamate racemases family.

The enzyme catalyses L-glutamate = D-glutamate. It functions in the pathway cell wall biogenesis; peptidoglycan biosynthesis. In terms of biological role, provides the (R)-glutamate required for cell wall biosynthesis. The polypeptide is Glutamate racemase (Lachnospira eligens (strain ATCC 27750 / DSM 3376 / VPI C15-48 / C15-B4) (Eubacterium eligens)).